The chain runs to 352 residues: Fe-S cluster assembly protein DRE2 (352 aa).

Over residues 1 to 11 (MAPTAVYTQKD) the composition is skewed to polar residues. The tract at residues 1 to 24 (MAPTAVYTQKDSPSSSQPSSKGPA) is disordered. Residues 1–196 (MAPTAVYTQK…TVTSAPSVPL (196 aa)) form an N-terminal SAM-like domain region. Residues 196-237 (LLLRKRGDPAKKKALWALTTDASASPSTKIDADALLTAEDKA) form a linker region. [2Fe-2S] cluster contacts are provided by Cys-243, Cys-257, Cys-260, and Cys-262. Residues 243-262 (CAPVDRSAPRRKKACKNCSC) are fe-S binding site A. Positions 315, 318, 326, and 329 each coordinate [4Fe-4S] cluster. 2 consecutive short sequence motifs (cx2C motif) follow at residues 315–318 (CGSC) and 326–329 (CAGC). A fe-S binding site B region spans residues 315–329 (CGSCFLGDAFRCAGC).

This sequence belongs to the anamorsin family. Monomer. Interacts with TAH18. Interacts with MIA40. It depends on [2Fe-2S] cluster as a cofactor. Requires [4Fe-4S] cluster as cofactor.

The protein localises to the cytoplasm. Its subcellular location is the mitochondrion intermembrane space. Functionally, component of the cytosolic iron-sulfur (Fe-S) protein assembly (CIA) machinery required for the maturation of extramitochondrial Fe-S proteins. Part of an electron transfer chain functioning in an early step of cytosolic Fe-S biogenesis, facilitating the de novo assembly of a [4Fe-4S] cluster on the scaffold complex CFD1-NBP35. Electrons are transferred to DRE2 from NADPH via the FAD- and FMN-containing protein TAH18. TAH18-DRE2 are also required for the assembly of the diferric tyrosyl radical cofactor of ribonucleotide reductase (RNR), probably by providing electrons for reduction during radical cofactor maturation in the catalytic small subunit RNR2. In Coprinopsis cinerea (strain Okayama-7 / 130 / ATCC MYA-4618 / FGSC 9003) (Inky cap fungus), this protein is Fe-S cluster assembly protein DRE2.